The sequence spans 344 residues: tRNA N6-adenosine threonylcarbamoyltransferase (344 aa).

Fe cation is bound by residues H111 and H115. Substrate is bound by residues 134–138 (LVSGG), D167, G180, D184, and N277. D305 contributes to the Fe cation binding site.

The protein belongs to the KAE1 / TsaD family. Fe(2+) is required as a cofactor.

It is found in the cytoplasm. The catalysed reaction is L-threonylcarbamoyladenylate + adenosine(37) in tRNA = N(6)-L-threonylcarbamoyladenosine(37) in tRNA + AMP + H(+). Required for the formation of a threonylcarbamoyl group on adenosine at position 37 (t(6)A37) in tRNAs that read codons beginning with adenine. Is involved in the transfer of the threonylcarbamoyl moiety of threonylcarbamoyl-AMP (TC-AMP) to the N6 group of A37, together with TsaE and TsaB. TsaD likely plays a direct catalytic role in this reaction. The protein is tRNA N6-adenosine threonylcarbamoyltransferase of Microcystis aeruginosa (strain NIES-843 / IAM M-2473).